The following is a 241-amino-acid chain: MKKIKIISFSVAYLILLTPIYASAMHIMEGFLPPLWAAIWSVISLPFIVGGFSKIKKITDESPNMKLLLGLVGAFVFVLSALKLPSVTGSTSHPTGVGLGTIIFGPLPMAVIGLIVLIFQALLLAHGGITTLGANVFSMAIVGPFAGYFIFKAIKDKNRSLAVFLAAMLADLITYIVTSLQLALAHPDAVNGIVGSFTKFMGIFAITQIPLAIGEGILTLIVYNLLVEYQKEGGFNLEKTH.

Positions 1–24 (MKKIKIISFSVAYLILLTPIYASA) are cleaved as a signal peptide. The next 6 membrane-spanning stretches (helical) occupy residues 30 to 50 (GFLPPLWAAIWSVISLPFIVG), 67 to 87 (LLLGLVGAFVFVLSALKLPSV), 99 to 119 (LGTIIFGPLPMAVIGLIVLIF), 131 to 151 (TLGANVFSMAIVGPFAGYFIF), 160 to 180 (SLAVFLAAMLADLITYIVTSL), and 202 to 222 (GIFAITQIPLAIGEGILTLIV).

Belongs to the CbiM family. In terms of assembly, forms an energy-coupling factor (ECF) transporter complex composed of an ATP-binding protein (A component, CbiO), a transmembrane protein (T component, CbiQ) and 2 possible substrate-capture proteins (S components, CbiM and CbiN) of unknown stoichimetry.

It is found in the cell membrane. The protein operates within cofactor biosynthesis; adenosylcobalamin biosynthesis. In terms of biological role, part of the energy-coupling factor (ECF) transporter complex CbiMNOQ involved in cobalt import. In Acetoanaerobium sticklandii (strain ATCC 12662 / DSM 519 / JCM 1433 / CCUG 9281 / NCIMB 10654 / HF) (Clostridium sticklandii), this protein is Cobalt transport protein CbiM.